We begin with the raw amino-acid sequence, 178 residues long: Large ribosomal subunit protein uL5 (178 aa).

It belongs to the universal ribosomal protein uL5 family. As to quaternary structure, part of the 50S ribosomal subunit; part of the 5S rRNA/L5/L18/L25 subcomplex. Contacts the 5S rRNA and the P site tRNA. Forms a bridge to the 30S subunit in the 70S ribosome.

This is one of the proteins that bind and probably mediate the attachment of the 5S RNA into the large ribosomal subunit, where it forms part of the central protuberance. In the 70S ribosome it contacts protein S13 of the 30S subunit (bridge B1b), connecting the 2 subunits; this bridge is implicated in subunit movement. Contacts the P site tRNA; the 5S rRNA and some of its associated proteins might help stabilize positioning of ribosome-bound tRNAs. The protein is Large ribosomal subunit protein uL5 of Psychrobacter arcticus (strain DSM 17307 / VKM B-2377 / 273-4).